Reading from the N-terminus, the 179-residue chain is Large ribosomal subunit protein uL6 (179 aa).

This sequence belongs to the universal ribosomal protein uL6 family. As to quaternary structure, part of the 50S ribosomal subunit.

Functionally, this protein binds to the 23S rRNA, and is important in its secondary structure. It is located near the subunit interface in the base of the L7/L12 stalk, and near the tRNA binding site of the peptidyltransferase center. The polypeptide is Large ribosomal subunit protein uL6 (Syntrophobacter fumaroxidans (strain DSM 10017 / MPOB)).